Here is a 306-residue protein sequence, read N- to C-terminus: D-alanine--D-alanine ligase (306 aa).

The 200-residue stretch at 104 to 303 (KMLWKAFGLP…FEQLVVKILE (200 aa)) folds into the ATP-grasp domain. Residue 134–189 (VAKLGLPLMVKPSLEGSSVGLTKVKAVEELKSAVEYALKFDNTILIEEWLAGDELT) coordinates ATP. Mg(2+)-binding residues include Asp-257, Glu-270, and Asn-272.

It belongs to the D-alanine--D-alanine ligase family. Mg(2+) is required as a cofactor. It depends on Mn(2+) as a cofactor.

The protein resides in the cytoplasm. The enzyme catalyses 2 D-alanine + ATP = D-alanyl-D-alanine + ADP + phosphate + H(+). It functions in the pathway cell wall biogenesis; peptidoglycan biosynthesis. Cell wall formation. The protein is D-alanine--D-alanine ligase of Haemophilus influenzae (strain 86-028NP).